The following is an 807-amino-acid chain: Leucine--tRNA ligase (807 aa).

Residues 40-51 (PYPSGTGLHVGH) carry the 'HIGH' region motif. Residues 576 to 580 (KMSKS) carry the 'KMSKS' region motif. Lysine 579 serves as a coordination point for ATP.

It belongs to the class-I aminoacyl-tRNA synthetase family.

The protein resides in the cytoplasm. It carries out the reaction tRNA(Leu) + L-leucine + ATP = L-leucyl-tRNA(Leu) + AMP + diphosphate. In Pelodictyon phaeoclathratiforme (strain DSM 5477 / BU-1), this protein is Leucine--tRNA ligase.